A 500-amino-acid polypeptide reads, in one-letter code: NAD(P)H-quinone oxidoreductase chain 4, chloroplastic (500 aa).

14 helical membrane passes run 4–24 (FPWL…LFFL), 35–55 (YTLC…CYHF), 87–107 (FGPI…AWPV), 134–154 (LLLF…LLSM), 167–187 (FILY…GIGL), 208–228 (ALEI…SPII), 242–262 (HYST…YGLV), 272–292 (AHSI…VYAA), 305–325 (IAYS…SITD), 330–350 (GALL…FLAG), 364–384 (MGGM…LSMA), 386–406 (LALP…GIIT), 416–436 (ILIT…SLSM), and 462–482 (LFVS…PDFL).

This sequence belongs to the complex I subunit 4 family.

The protein localises to the plastid. It is found in the chloroplast thylakoid membrane. The catalysed reaction is a plastoquinone + NADH + (n+1) H(+)(in) = a plastoquinol + NAD(+) + n H(+)(out). The enzyme catalyses a plastoquinone + NADPH + (n+1) H(+)(in) = a plastoquinol + NADP(+) + n H(+)(out). The chain is NAD(P)H-quinone oxidoreductase chain 4, chloroplastic from Pelargonium hortorum (Common geranium).